Reading from the N-terminus, the 592-residue chain is MIDLSTMKQQIETLLNQAIERLKTKGVLKPEVTPVIKITHTTDPQHGDFATNLALTLSKAAGMSPHALAEKIVEALPPSGQITEVEIAGPGFINFFVTEGSYQTVVSSILKAGKDYGRSEMGKGQRVHMEYVSANPTGPLHVGHGRGAAYGACVANLLNAAGFEVHREYYVNDAGRQMGILALSVWVRYLQGYEASIELPKNAYQGEYIIDIAEALKAKYGKQFYHSVESIQAKIPEEIDSNADPEAYLDAWVTAQKDLLGPKDFECVFQAALDSILNDIKNDLEEFSVTYDDWFPESRLVREGLIQEGLDLLTKHGYVYEKNGAQWFRATALGDEKDRVLFRKNGLPTYFAADVAYHLHKFNQGYDQIIDIFGADHHGYIPRIRGFLKGLGKAPEKLHILLVQFAILYRGNEKVSMSTRGGTFVTLRELRHEVGNDAARFFYIMRKPDQHLDFDLELAKSQSNENPVYYIQYAHARICSVFRQLKTTQKNWDRPRGMENLSLLSTNHEKELLATLGRYPEVIKRAAMNYAPHLLAHYLQTLANQFHTYYNAERFLIEDDNLRNARLNLINAVQQIIRNGLTLLGVSAPEEM.

A 'HIGH' region motif is present at residues 134–144 (ANPTGPLHVGH).

Belongs to the class-I aminoacyl-tRNA synthetase family. As to quaternary structure, monomer.

The protein resides in the cytoplasm. It carries out the reaction tRNA(Arg) + L-arginine + ATP = L-arginyl-tRNA(Arg) + AMP + diphosphate. This is Arginine--tRNA ligase from Coxiella burnetii (strain CbuK_Q154) (Coxiella burnetii (strain Q154)).